Reading from the N-terminus, the 486-residue chain is ATP synthase subunit beta (486 aa).

Position 164-171 (164-171 (GGAGVGKT)) interacts with ATP.

Belongs to the ATPase alpha/beta chains family. F-type ATPases have 2 components, CF(1) - the catalytic core - and CF(0) - the membrane proton channel. CF(1) has five subunits: alpha(3), beta(3), gamma(1), delta(1), epsilon(1). CF(0) has four main subunits: a(1), b(1), b'(1) and c(9-12).

It localises to the cellular thylakoid membrane. It carries out the reaction ATP + H2O + 4 H(+)(in) = ADP + phosphate + 5 H(+)(out). Functionally, produces ATP from ADP in the presence of a proton gradient across the membrane. The catalytic sites are hosted primarily by the beta subunits. The polypeptide is ATP synthase subunit beta (Prochlorococcus marinus (strain MIT 9215)).